A 366-amino-acid polypeptide reads, in one-letter code: MKFTVEREHLLKPLQQVSGPLGGRPTLPILGNLLLQVADGTLSLTGTDLEMEMVARVALVQPHEPGATTVPARKFFDICRGLPEGAEIAVQLEGERMLVRSGRSRFSLSTLPAADFPNLDDWQSEVEFTLPQATMKRLIEATQFSMAHQDVRYYLNGMLFETEGEELRTVATDGHRLAVCSMPIGQSLPSHSVIVPRKGVIELMRMLDGGDNPLRVQIGSNNIRAHVGDFIFTSKLVDGRFPDYRRVLPKNPDKHLEAGCDLLKQAFARAAILSNEKFRGVRLYVSENQLKITANNPEQEEAEEILDVTYSGAEMEIGFNVSYVLDVLNALKCENVRMMLTDSVSSVQIEDAASQSAAYVVMPMRL.

Residues 1-125 (MKFTVEREHL…FPNLDDWQSE (125 aa)) form an i region. Residues 126–253 (VEFTLPQATM…YRRVLPKNPD (128 aa)) form an II region. The segment at 254-366 (KHLEAGCDLL…AAYVVMPMRL (113 aa)) is III.

It belongs to the beta sliding clamp family. Forms a ring-shaped head-to-tail homodimer around DNA which binds and tethers DNA polymerases and other proteins to the DNA. The DNA replisome complex has a single clamp-loading complex (3 tau and 1 each of delta, delta', psi and chi subunits) which binds 3 Pol III cores (1 core on the leading strand and 2 on the lagging strand) each with a beta sliding clamp dimer. Additional proteins in the replisome are other copies of gamma, psi and chi, Ssb, DNA helicase and RNA primase.

It is found in the cytoplasm. Functionally, confers DNA tethering and processivity to DNA polymerases and other proteins. Acts as a clamp, forming a ring around DNA (a reaction catalyzed by the clamp-loading complex) which diffuses in an ATP-independent manner freely and bidirectionally along dsDNA. Initially characterized for its ability to contact the catalytic subunit of DNA polymerase III (Pol III), a complex, multichain enzyme responsible for most of the replicative synthesis in bacteria; Pol III exhibits 3'-5' exonuclease proofreading activity. The beta chain is required for initiation of replication as well as for processivity of DNA replication. This is Beta sliding clamp (dnaN) from Escherichia coli O157:H7.